Here is a 198-residue protein sequence, read N- to C-terminus: MEHYISLLVKSIFIENMALSFFLGMCTFLAVSKKVKTSFGLGVAVVVVLTLAVPLNNLVYTYLLKDGALVEGVDLSFLNFITFIGVIAALVQILEMVLDRFFPPLYNALGIFLPLITVNCAIFGGVSFMVQRDYNFTESIVYGFGSGVGWMLAIVALAGIREKMKYSDVPPGLRGLGITFITVGLMALGFMSFSGVQL.

Helical transmembrane passes span 11–31 (SIFI…FLAV), 39–59 (FGLG…NNLV), 77–97 (FLNF…LEMV), 110–130 (GIFL…SFMV), 140–160 (IVYG…LAGI), and 176–196 (LGIT…FSGV).

Belongs to the NqrDE/RnfAE family. Composed of six subunits; NqrA, NqrB, NqrC, NqrD, NqrE and NqrF.

The protein localises to the cell inner membrane. It catalyses the reaction a ubiquinone + n Na(+)(in) + NADH + H(+) = a ubiquinol + n Na(+)(out) + NAD(+). In terms of biological role, NQR complex catalyzes the reduction of ubiquinone-1 to ubiquinol by two successive reactions, coupled with the transport of Na(+) ions from the cytoplasm to the periplasm. NqrA to NqrE are probably involved in the second step, the conversion of ubisemiquinone to ubiquinol. The sequence is that of Na(+)-translocating NADH-quinone reductase subunit E from Aliivibrio salmonicida (strain LFI1238) (Vibrio salmonicida (strain LFI1238)).